Reading from the N-terminus, the 408-residue chain is Tripartite motif containing 13 (408 aa).

The RING-type zinc-finger motif lies at 10–58; the sequence is CPICCSLFDDPRVLPCSHNFCKKCLDGVLEENSRTMQWRPSSFKCPTCR. The segment at 89-131 adopts a B box-type zinc-finger fold; the sequence is PKMPVCKEHSDQPLNIFCSTDLKLICGSCATTGEHKKHVFSSI. Residues Cys94, His97, Cys117, and His123 each coordinate Zn(2+). Residues 322 to 342 traverse the membrane as a helical segment; it reads ILVVACLILLLVTFLCAYPFI.

The protein resides in the endoplasmic reticulum membrane. It participates in protein modification; protein ubiquitination. E3 ubiquitin ligase involved in the retrotranslocation and turnover of membrane and secretory proteins from the ER through a set of processes named ER-associated degradation (ERAD). This process acts on misfolded proteins as well as in the regulated degradation of correctly folded proteins. In Xenopus tropicalis (Western clawed frog), this protein is Tripartite motif containing 13 (trim13).